The following is a 507-amino-acid chain: Probable cytosol aminopeptidase (507 aa).

Mn(2+) is bound by residues K254 and D259. K266 is an active-site residue. Mn(2+) contacts are provided by D277, D336, and E338. Residue R340 is part of the active site. Positions P486–A507 are disordered. Residues A489–A507 show a composition bias toward basic residues.

It belongs to the peptidase M17 family. Requires Mn(2+) as cofactor.

Its subcellular location is the cytoplasm. It carries out the reaction Release of an N-terminal amino acid, Xaa-|-Yaa-, in which Xaa is preferably Leu, but may be other amino acids including Pro although not Arg or Lys, and Yaa may be Pro. Amino acid amides and methyl esters are also readily hydrolyzed, but rates on arylamides are exceedingly low.. The enzyme catalyses Release of an N-terminal amino acid, preferentially leucine, but not glutamic or aspartic acids.. Functionally, presumably involved in the processing and regular turnover of intracellular proteins. Catalyzes the removal of unsubstituted N-terminal amino acids from various peptides. The polypeptide is Probable cytosol aminopeptidase (Polaromonas sp. (strain JS666 / ATCC BAA-500)).